A 463-amino-acid chain; its full sequence is NADH-quinone oxidoreductase subunit N (463 aa).

14 helical membrane passes run 2–22 (NTLI…ILNF), 25–45 (GIVP…FYEF), 61–81 (FSTA…ALSH), 91–110 (ISDF…AMVS), 114–133 (LAMF…VLAA), 149–169 (FLMG…IYGA), 189–209 (IWFP…IAAV), 223–243 (PALT…ATLF), 264–284 (FTNV…IMAL), 292–312 (MLAF…LTIA), 317–337 (VLLY…SVIL), 362–382 (AAIL…SGFF), 395–415 (GYVA…GYYF), and 434–454 (PFLI…LGLF).

It belongs to the complex I subunit 2 family. NDH-1 is composed of 14 different subunits. Subunits NuoA, H, J, K, L, M, N constitute the membrane sector of the complex.

It localises to the cell inner membrane. The catalysed reaction is a quinone + NADH + 5 H(+)(in) = a quinol + NAD(+) + 4 H(+)(out). Functionally, NDH-1 shuttles electrons from NADH, via FMN and iron-sulfur (Fe-S) centers, to quinones in the respiratory chain. The immediate electron acceptor for the enzyme in this species is believed to be a menaquinone. Couples the redox reaction to proton translocation (for every two electrons transferred, four hydrogen ions are translocated across the cytoplasmic membrane), and thus conserves the redox energy in a proton gradient. The sequence is that of NADH-quinone oxidoreductase subunit N from Flavobacterium johnsoniae (strain ATCC 17061 / DSM 2064 / JCM 8514 / BCRC 14874 / CCUG 350202 / NBRC 14942 / NCIMB 11054 / UW101) (Cytophaga johnsonae).